Reading from the N-terminus, the 268-residue chain is Cytochrome b-c1 complex subunit Rieske-5, mitochondrial (268 aa).

Residues 1–56 (MLRIAGRKLSSSAAARSSSAFFTRNPFTFTDDSSSPTRSPSPTSLASQFLDQFRGF) constitute a mitochondrion transit peptide. Topologically, residues 57–105 (SSNSVSPAHQTGLVSDLPATVAAIKNPSSKIVYDDSNHERYPPGDPSKR) are mitochondrial matrix. The helical transmembrane segment at 106–128 (AFAYFVLTGGRFVYASLVRLLIL) threads the bilayer. Over 129-268 (KFVLSMSASK…FMEENKLLIG (140 aa)) the chain is Mitochondrial intermembrane. The region spanning 178–266 (INLANSVDLG…YSFMEENKLL (89 aa)) is the Rieske domain. C211, H213, C230, and H233 together coordinate [2Fe-2S] cluster. A disulfide bridge links C216 with C232.

Belongs to the Rieske iron-sulfur protein family. Component of the ubiquinol-cytochrome c oxidoreductase (cytochrome b-c1 complex, complex III, CIII), a multisubunit enzyme composed of 3 respiratory subunits cytochrome b, cytochrome c1 and Rieske protein, 2 core protein subunits, and several low-molecular weight protein subunits. The complex exists as an obligatory dimer and forms supercomplexes (SCs) in the inner mitochondrial membrane with cytochrome c oxidase (complex IV, CIV). [2Fe-2S] cluster serves as cofactor. As to expression, high levels are seen in the flowers while a low level expression is seen in the roots, leaves and stems.

It localises to the mitochondrion inner membrane. The catalysed reaction is a quinol + 2 Fe(III)-[cytochrome c](out) = a quinone + 2 Fe(II)-[cytochrome c](out) + 2 H(+)(out). In terms of biological role, component of the ubiquinol-cytochrome c oxidoreductase, a multisubunit transmembrane complex that is part of the mitochondrial electron transport chain which drives oxidative phosphorylation. The respiratory chain contains 3 multisubunit complexes succinate dehydrogenase (complex II, CII), ubiquinol-cytochrome c oxidoreductase (cytochrome b-c1 complex, complex III, CIII) and cytochrome c oxidase (complex IV, CIV), that cooperate to transfer electrons derived from NADH and succinate to molecular oxygen, creating an electrochemical gradient over the inner membrane that drives transmembrane transport and the ATP synthase. The cytochrome b-c1 complex catalyzes electron transfer from ubiquinol to cytochrome c, linking this redox reaction to translocation of protons across the mitochondrial inner membrane, with protons being carried across the membrane as hydrogens on the quinol. In the process called Q cycle, 2 protons are consumed from the matrix, 4 protons are released into the intermembrane space and 2 electrons are passed to cytochrome c. The Rieske protein is a catalytic core subunit containing a [2Fe-2S] iron-sulfur cluster. It cycles between 2 conformational states during catalysis to transfer electrons from the quinol bound in the Q(0) site in cytochrome b to cytochrome c1. The polypeptide is Cytochrome b-c1 complex subunit Rieske-5, mitochondrial (Nicotiana tabacum (Common tobacco)).